We begin with the raw amino-acid sequence, 153 residues long: UPF0768 protein PB2B2.18 (153 aa).

Belongs to the UPF0768 family.

This Schizosaccharomyces pombe (strain 972 / ATCC 24843) (Fission yeast) protein is UPF0768 protein PB2B2.18.